A 471-amino-acid polypeptide reads, in one-letter code: Cysteine--tRNA ligase (471 aa).

Zn(2+) is bound at residue Cys-29. Positions 31–41 (PTVYNYIHIGN) match the 'HIGH' region motif. Zn(2+) contacts are provided by Cys-209, His-234, and Glu-238. Positions 266–270 (KMSKS) match the 'KMSKS' region motif. Lys-269 serves as a coordination point for ATP.

Belongs to the class-I aminoacyl-tRNA synthetase family. In terms of assembly, monomer. Zn(2+) serves as cofactor.

It is found in the cytoplasm. It catalyses the reaction tRNA(Cys) + L-cysteine + ATP = L-cysteinyl-tRNA(Cys) + AMP + diphosphate. The protein is Cysteine--tRNA ligase of Listeria welshimeri serovar 6b (strain ATCC 35897 / DSM 20650 / CCUG 15529 / CIP 8149 / NCTC 11857 / SLCC 5334 / V8).